We begin with the raw amino-acid sequence, 352 residues long: Anthranilate phosphoribosyltransferase (352 aa).

5-phospho-alpha-D-ribose 1-diphosphate is bound by residues Gly94, 97-98 (GS), Ser102, 104-107 (NIST), 122-130 (KHGNRAVSS), and Ser134. Gly94 contacts anthranilate. Position 106 (Ser106) interacts with Mg(2+). Asn125 is a binding site for anthranilate. Arg180 contacts anthranilate. Positions 239 and 240 each coordinate Mg(2+).

This sequence belongs to the anthranilate phosphoribosyltransferase family. Homodimer. It depends on Mg(2+) as a cofactor.

It catalyses the reaction N-(5-phospho-beta-D-ribosyl)anthranilate + diphosphate = 5-phospho-alpha-D-ribose 1-diphosphate + anthranilate. Its pathway is amino-acid biosynthesis; L-tryptophan biosynthesis; L-tryptophan from chorismate: step 2/5. Functionally, catalyzes the transfer of the phosphoribosyl group of 5-phosphorylribose-1-pyrophosphate (PRPP) to anthranilate to yield N-(5'-phosphoribosyl)-anthranilate (PRA). This chain is Anthranilate phosphoribosyltransferase, found in Citrifermentans bemidjiense (strain ATCC BAA-1014 / DSM 16622 / JCM 12645 / Bem) (Geobacter bemidjiensis).